The chain runs to 921 residues: Isoleucine--tRNA ligase (921 aa).

Positions 57–67 match the 'HIGH' region motif; sequence PYANGDIHMGH. Position 552 (E552) interacts with L-isoleucyl-5'-AMP. The 'KMSKS' region motif lies at 593–597; the sequence is KMSKS. Position 596 (K596) interacts with ATP. Positions 887, 890, 907, and 910 each coordinate Zn(2+).

This sequence belongs to the class-I aminoacyl-tRNA synthetase family. IleS type 1 subfamily. As to quaternary structure, monomer. Requires Zn(2+) as cofactor.

The protein resides in the cytoplasm. It carries out the reaction tRNA(Ile) + L-isoleucine + ATP = L-isoleucyl-tRNA(Ile) + AMP + diphosphate. Catalyzes the attachment of isoleucine to tRNA(Ile). As IleRS can inadvertently accommodate and process structurally similar amino acids such as valine, to avoid such errors it has two additional distinct tRNA(Ile)-dependent editing activities. One activity is designated as 'pretransfer' editing and involves the hydrolysis of activated Val-AMP. The other activity is designated 'posttransfer' editing and involves deacylation of mischarged Val-tRNA(Ile). The polypeptide is Isoleucine--tRNA ligase (Halalkalibacterium halodurans (strain ATCC BAA-125 / DSM 18197 / FERM 7344 / JCM 9153 / C-125) (Bacillus halodurans)).